Reading from the N-terminus, the 271-residue chain is Dehydrodolichyl diphosphate synthase 7 (271 aa).

Residues Phe-24–Ile-41 form a helical membrane-spanning segment.

Belongs to the UPP synthase family. Mg(2+) serves as cofactor.

The protein resides in the endoplasmic reticulum membrane. The protein operates within protein modification; protein glycosylation. Catalyzes cis-prenyl chain elongation to produce the polyprenyl backbone of dolichol, a glycosyl carrier-lipid required for the biosynthesis of several classes of glycoprotein. This is Dehydrodolichyl diphosphate synthase 7 from Arabidopsis thaliana (Mouse-ear cress).